We begin with the raw amino-acid sequence, 926 residues long: Bifunctional uridylyltransferase/uridylyl-removing enzyme (926 aa).

Residues 1–379 (MPVSFLSLAS…PKSRRSGASK (379 aa)) are uridylyltransferase. The uridylyl-removing stretch occupies residues 380-736 (QIDGFPVIQG…GHEMPAYDAT (357 aa)). Residues 496 to 618 (VDEHAIRALD…VKSPERLRLL (123 aa)) enclose the HD domain. 2 consecutive ACT domains span residues 737–814 (MISL…IRSS) and 849–926 (VIEV…ISEK).

It belongs to the GlnD family. Mg(2+) serves as cofactor.

The catalysed reaction is [protein-PII]-L-tyrosine + UTP = [protein-PII]-uridylyl-L-tyrosine + diphosphate. The enzyme catalyses [protein-PII]-uridylyl-L-tyrosine + H2O = [protein-PII]-L-tyrosine + UMP + H(+). Its activity is regulated as follows. Uridylyltransferase (UTase) activity is inhibited by glutamine, while glutamine activates uridylyl-removing (UR) activity. In terms of biological role, modifies, by uridylylation and deuridylylation, the PII regulatory proteins (GlnB and homologs), in response to the nitrogen status of the cell that GlnD senses through the glutamine level. Under low glutamine levels, catalyzes the conversion of the PII proteins and UTP to PII-UMP and PPi, while under higher glutamine levels, GlnD hydrolyzes PII-UMP to PII and UMP (deuridylylation). Thus, controls uridylylation state and activity of the PII proteins, and plays an important role in the regulation of nitrogen assimilation and metabolism. This Zymomonas mobilis subsp. mobilis (strain ATCC 31821 / ZM4 / CP4) protein is Bifunctional uridylyltransferase/uridylyl-removing enzyme.